We begin with the raw amino-acid sequence, 94 residues long: Co-chaperonin GroES (94 aa).

The protein belongs to the GroES chaperonin family. In terms of assembly, heptamer of 7 subunits arranged in a ring. Interacts with the chaperonin GroEL.

It localises to the cytoplasm. Its function is as follows. Together with the chaperonin GroEL, plays an essential role in assisting protein folding. The GroEL-GroES system forms a nano-cage that allows encapsulation of the non-native substrate proteins and provides a physical environment optimized to promote and accelerate protein folding. GroES binds to the apical surface of the GroEL ring, thereby capping the opening of the GroEL channel. In Clostridium beijerinckii (strain ATCC 51743 / NCIMB 8052) (Clostridium acetobutylicum), this protein is Co-chaperonin GroES.